We begin with the raw amino-acid sequence, 825 residues long: Glycerol-3-phosphate acyltransferase (825 aa).

Residues 304–309 (CHRSHM) carry the HXXXXD motif motif. The tract at residues 803-825 (MPAETSNQPEAPETPEPEGKTES) is disordered.

It belongs to the GPAT/DAPAT family.

The protein resides in the cell inner membrane. It carries out the reaction sn-glycerol 3-phosphate + an acyl-CoA = a 1-acyl-sn-glycero-3-phosphate + CoA. Its pathway is phospholipid metabolism; CDP-diacylglycerol biosynthesis; CDP-diacylglycerol from sn-glycerol 3-phosphate: step 1/3. In Yersinia pseudotuberculosis serotype O:1b (strain IP 31758), this protein is Glycerol-3-phosphate acyltransferase.